Consider the following 203-residue polypeptide: MAAAKDSHEDHDTSTENADESNHDPQFEPIVSLPEQEIKTLEEDEEELFKMRAKLFRFASENDLPEWKERGTGDVKLLKHKEKGTIRLLMRRDKTLKICANHYITPMMELKPNAGSDRAWVWNTHADFADECPKPELLAIRFLNAENAQKFKTKFEECRKEIEEREKKGPGKNDNAEKVAEKLEALSVREAREEAEEKSEEKQ.

Positions 1 to 26 (MAAAKDSHEDHDTSTENADESNHDPQ) are enriched in basic and acidic residues. The disordered stretch occupies residues 1-33 (MAAAKDSHEDHDTSTENADESNHDPQFEPIVSL). At Ala2 the chain carries N-acetylalanine. A Phosphothreonine modification is found at Thr13. 2 positions are modified to phosphoserine: Ser21 and Ser60. The region spanning 26–164 (QFEPIVSLPE…FEECRKEIEE (139 aa)) is the RanBD1 domain. Lys150 bears the N6-acetyllysine; alternate mark. Lys150 bears the N6-succinyllysine; alternate mark. Basic and acidic residues predominate over residues 163–192 (EEREKKGPGKNDNAEKVAEKLEALSVREAR). The segment at 163–203 (EEREKKGPGKNDNAEKVAEKLEALSVREAREEAEEKSEEKQ) is disordered. Residue Lys182 is modified to N6-acetyllysine. The residue at position 187 (Ser187) is a Phosphoserine. Acidic residues predominate over residues 193-203 (EEAEEKSEEKQ).

The protein belongs to the RANBP1 family. As to quaternary structure, interacts with RAN (via C-terminus of GTP-bound form) but not with GDP-bound RAN. Identified in a complex composed of RAN, RANGAP1 and RANBP1. Identified in a complex that contains TNPO1, RAN and RANBP1. Identified in a complex that contains CSE1L, KPNA2, RAN and RANBP1. Identified in a complex with nucleotide-free RAN and RCC1.

In terms of biological role, plays a role in RAN-dependent nucleocytoplasmic transport. Alleviates the TNPO1-dependent inhibition of RAN GTPase activity and mediates the dissociation of RAN from proteins involved in transport into the nucleus. Induces a conformation change in the complex formed by XPO1 and RAN that triggers the release of the nuclear export signal of cargo proteins. Promotes the disassembly of the complex formed by RAN and importin beta. Promotes dissociation of RAN from a complex with KPNA2 and CSE1L. Required for normal mitotic spindle assembly and normal progress through mitosis via its effect on RAN. Does not increase the RAN GTPase activity by itself, but increases GTP hydrolysis mediated by RANGAP1. Inhibits RCC1-dependent exchange of RAN-bound GDP by GTP. The protein is Ran-specific GTPase-activating protein (Ranbp1) of Mus musculus (Mouse).